A 122-amino-acid chain; its full sequence is Small ribosomal subunit protein uS13 (122 aa).

Positions 95–122 (SLPCRGQRTSTNARTRKGPKRAAVKKKK) are disordered. The segment covering 108–122 (RTRKGPKRAAVKKKK) has biased composition (basic residues).

The protein belongs to the universal ribosomal protein uS13 family. In terms of assembly, part of the 30S ribosomal subunit. Forms a loose heterodimer with protein S19. Forms two bridges to the 50S subunit in the 70S ribosome.

Located at the top of the head of the 30S subunit, it contacts several helices of the 16S rRNA. In the 70S ribosome it contacts the 23S rRNA (bridge B1a) and protein L5 of the 50S subunit (bridge B1b), connecting the 2 subunits; these bridges are implicated in subunit movement. Contacts the tRNAs in the A and P-sites. This chain is Small ribosomal subunit protein uS13, found in Desulforapulum autotrophicum (strain ATCC 43914 / DSM 3382 / VKM B-1955 / HRM2) (Desulfobacterium autotrophicum).